A 455-amino-acid chain; its full sequence is Bifunctional protein GlmU (455 aa).

Residues M1–R227 are pyrophosphorylase. UDP-N-acetyl-alpha-D-glucosamine contacts are provided by residues L8–G11, K22, Q73, G78–T79, Y100–D102, G137, E152, N167, and N225. D102 contributes to the Mg(2+) binding site. N225 contacts Mg(2+). The linker stretch occupies residues W228–A248. The N-acetyltransferase stretch occupies residues G249–E455. The UDP-N-acetyl-alpha-D-glucosamine site is built by R332 and K350. Catalysis depends on H362, which acts as the Proton acceptor. Residues Y365 and N376 each contribute to the UDP-N-acetyl-alpha-D-glucosamine site. Acetyl-CoA contacts are provided by residues A379, N385 to Y386, S404, A422, and R439.

It in the N-terminal section; belongs to the N-acetylglucosamine-1-phosphate uridyltransferase family. This sequence in the C-terminal section; belongs to the transferase hexapeptide repeat family. As to quaternary structure, homotrimer. Mg(2+) serves as cofactor.

It localises to the cytoplasm. The catalysed reaction is alpha-D-glucosamine 1-phosphate + acetyl-CoA = N-acetyl-alpha-D-glucosamine 1-phosphate + CoA + H(+). The enzyme catalyses N-acetyl-alpha-D-glucosamine 1-phosphate + UTP + H(+) = UDP-N-acetyl-alpha-D-glucosamine + diphosphate. It participates in nucleotide-sugar biosynthesis; UDP-N-acetyl-alpha-D-glucosamine biosynthesis; N-acetyl-alpha-D-glucosamine 1-phosphate from alpha-D-glucosamine 6-phosphate (route II): step 2/2. It functions in the pathway nucleotide-sugar biosynthesis; UDP-N-acetyl-alpha-D-glucosamine biosynthesis; UDP-N-acetyl-alpha-D-glucosamine from N-acetyl-alpha-D-glucosamine 1-phosphate: step 1/1. The protein operates within bacterial outer membrane biogenesis; LPS lipid A biosynthesis. Functionally, catalyzes the last two sequential reactions in the de novo biosynthetic pathway for UDP-N-acetylglucosamine (UDP-GlcNAc). The C-terminal domain catalyzes the transfer of acetyl group from acetyl coenzyme A to glucosamine-1-phosphate (GlcN-1-P) to produce N-acetylglucosamine-1-phosphate (GlcNAc-1-P), which is converted into UDP-GlcNAc by the transfer of uridine 5-monophosphate (from uridine 5-triphosphate), a reaction catalyzed by the N-terminal domain. The chain is Bifunctional protein GlmU from Coxiella burnetii (strain Dugway 5J108-111).